We begin with the raw amino-acid sequence, 80 residues long: Cytochrome c oxidase subunit 7B, mitochondrial (80 aa).

The transit peptide at 1-24 (MFPLAKNALSRLRVQSIQQAVARQ) directs the protein to the mitochondrion. Residues 25–32 (IHQKRAPD) lie on the Mitochondrial matrix side of the membrane. The helical transmembrane segment at 33–59 (FHDKYGNAVLASGATFCVAVWVYMATQ) threads the bilayer. Over 60-80 (IGIEWNPSPVGRVTPKEWREQ) the chain is Mitochondrial intermembrane.

This sequence belongs to the cytochrome c oxidase VIIb family. As to quaternary structure, component of the cytochrome c oxidase (complex IV, CIV), a multisubunit enzyme composed of 14 subunits. The complex is composed of a catalytic core of 3 subunits MT-CO1, MT-CO2 and MT-CO3, encoded in the mitochondrial DNA, and 11 supernumerary subunits COX4I1 (or COX4I2), COX5A, COX5B, COX6A2 (or COX6A1), COX6B1 (or COX6B2), COX6C, COX7A1 (or COX7A2), COX7B, COX7C, COX8B and NDUFA4, which are encoded in the nuclear genome. The complex exists as a monomer or a dimer and forms supercomplexes (SCs) in the inner mitochondrial membrane with NADH-ubiquinone oxidoreductase (complex I, CI) and ubiquinol-cytochrome c oxidoreductase (cytochrome b-c1 complex, complex III, CIII), resulting in different assemblies (supercomplex SCI(1)III(2)IV(1) and megacomplex MCI(2)III(2)IV(2)).

It localises to the mitochondrion inner membrane. The protein operates within energy metabolism; oxidative phosphorylation. Component of the cytochrome c oxidase, the last enzyme in the mitochondrial electron transport chain which drives oxidative phosphorylation. The respiratory chain contains 3 multisubunit complexes succinate dehydrogenase (complex II, CII), ubiquinol-cytochrome c oxidoreductase (cytochrome b-c1 complex, complex III, CIII) and cytochrome c oxidase (complex IV, CIV), that cooperate to transfer electrons derived from NADH and succinate to molecular oxygen, creating an electrochemical gradient over the inner membrane that drives transmembrane transport and the ATP synthase. Cytochrome c oxidase is the component of the respiratory chain that catalyzes the reduction of oxygen to water. Electrons originating from reduced cytochrome c in the intermembrane space (IMS) are transferred via the dinuclear copper A center (CU(A)) of subunit 2 and heme A of subunit 1 to the active site in subunit 1, a binuclear center (BNC) formed by heme A3 and copper B (CU(B)). The BNC reduces molecular oxygen to 2 water molecules using 4 electrons from cytochrome c in the IMS and 4 protons from the mitochondrial matrix. Plays a role in proper central nervous system (CNS) development in vertebrates. The sequence is that of Cytochrome c oxidase subunit 7B, mitochondrial (COX7B) from Bos taurus (Bovine).